A 1057-amino-acid chain; its full sequence is Carbamoyl phosphate synthase large chain (1057 aa).

The segment at 1 to 401 (MPKRNDIKTI…SLLKAIRSLE (401 aa)) is carboxyphosphate synthetic domain. The ATP site is built by R129, R169, G175, G176, K208, I210, E215, G241, I242, H243, Q284, and E298. The 195-residue stretch at 133-327 (RTLMNDLNVP…IAKLAAKIAV (195 aa)) folds into the ATP-grasp 1 domain. Mg(2+) contacts are provided by Q284, E298, and N300. Q284, E298, and N300 together coordinate Mn(2+). The segment at 402–546 (YGVHHLGLPN…YGTYETENES (145 aa)) is oligomerization domain. A carbamoyl phosphate synthetic domain region spans residues 547–929 (IVTDKEKILV…ALFKGLTGSG (383 aa)). The ATP-grasp 2 domain occupies 671 to 861 (EALLRKINVP…MAQLAMRAII (191 aa)). The ATP site is built by R707, R746, L748, E752, G777, V778, H779, S780, Q820, and E832. Q820, E832, and N834 together coordinate Mg(2+). The Mn(2+) site is built by Q820, E832, and N834. The MGS-like domain maps to 930 to 1057 (VEVKDHGTVL…ESMTFTMRQM (128 aa)). The allosteric domain stretch occupies residues 930–1057 (VEVKDHGTVL…ESMTFTMRQM (128 aa)).

Belongs to the CarB family. Composed of two chains; the small (or glutamine) chain promotes the hydrolysis of glutamine to ammonia, which is used by the large (or ammonia) chain to synthesize carbamoyl phosphate. Tetramer of heterodimers (alpha,beta)4. It depends on Mg(2+) as a cofactor. Mn(2+) is required as a cofactor.

The catalysed reaction is hydrogencarbonate + L-glutamine + 2 ATP + H2O = carbamoyl phosphate + L-glutamate + 2 ADP + phosphate + 2 H(+). The enzyme catalyses hydrogencarbonate + NH4(+) + 2 ATP = carbamoyl phosphate + 2 ADP + phosphate + 2 H(+). It participates in amino-acid biosynthesis; L-arginine biosynthesis; carbamoyl phosphate from bicarbonate: step 1/1. Its pathway is pyrimidine metabolism; UMP biosynthesis via de novo pathway; (S)-dihydroorotate from bicarbonate: step 1/3. Large subunit of the glutamine-dependent carbamoyl phosphate synthetase (CPSase). CPSase catalyzes the formation of carbamoyl phosphate from the ammonia moiety of glutamine, carbonate, and phosphate donated by ATP, constituting the first step of 2 biosynthetic pathways, one leading to arginine and/or urea and the other to pyrimidine nucleotides. The large subunit (synthetase) binds the substrates ammonia (free or transferred from glutamine from the small subunit), hydrogencarbonate and ATP and carries out an ATP-coupled ligase reaction, activating hydrogencarbonate by forming carboxy phosphate which reacts with ammonia to form carbamoyl phosphate. The protein is Carbamoyl phosphate synthase large chain of Staphylococcus aureus (strain USA300 / TCH1516).